Reading from the N-terminus, the 388-residue chain is Succinate--CoA ligase [ADP-forming] subunit beta (388 aa).

In terms of domain architecture, ATP-grasp spans 9–245; that stretch reads KELLAGYGLP…KSQENERELK (237 aa). Residues Lys46, 53-55, Glu100, Tyr103, and Glu108 each bind ATP; that span reads GRG. Mg(2+)-binding residues include Asn200 and Asp214. Residues Asn265 and 322 to 324 contribute to the substrate site; that span reads GIV.

It belongs to the succinate/malate CoA ligase beta subunit family. Heterotetramer of two alpha and two beta subunits. Mg(2+) is required as a cofactor.

It carries out the reaction succinate + ATP + CoA = succinyl-CoA + ADP + phosphate. The enzyme catalyses GTP + succinate + CoA = succinyl-CoA + GDP + phosphate. Its pathway is carbohydrate metabolism; tricarboxylic acid cycle; succinate from succinyl-CoA (ligase route): step 1/1. In terms of biological role, succinyl-CoA synthetase functions in the citric acid cycle (TCA), coupling the hydrolysis of succinyl-CoA to the synthesis of either ATP or GTP and thus represents the only step of substrate-level phosphorylation in the TCA. The beta subunit provides nucleotide specificity of the enzyme and binds the substrate succinate, while the binding sites for coenzyme A and phosphate are found in the alpha subunit. In Neisseria meningitidis serogroup C (strain 053442), this protein is Succinate--CoA ligase [ADP-forming] subunit beta.